We begin with the raw amino-acid sequence, 57 residues long: Large ribosomal subunit protein bL32c (57 aa).

Belongs to the bacterial ribosomal protein bL32 family.

Its subcellular location is the plastid. The protein resides in the chloroplast. The protein is Large ribosomal subunit protein bL32c of Drimys granadensis.